The following is a 94-amino-acid chain: Large ribosomal subunit protein bL27 (94 aa).

The propeptide occupies 1-9 (MLRLDLQFF).

This sequence belongs to the bacterial ribosomal protein bL27 family. The N-terminus is cleaved by ribosomal processing cysteine protease Prp.

In Bacillus pumilus (strain SAFR-032), this protein is Large ribosomal subunit protein bL27.